Reading from the N-terminus, the 675-residue chain is Methionine--tRNA ligase (675 aa).

The 'HIGH' region signature appears at 15 to 25; sequence PYANGSIHLGH. Zn(2+) contacts are provided by Cys-146, Cys-149, Cys-159, and Cys-162. The 'KMSKS' region motif lies at 332 to 336; it reads KMSKS. An ATP-binding site is contributed by Lys-335. A tRNA-binding domain is found at 573–675; sequence DFAKVDMRIA…SGAQPGMQVK (103 aa).

Belongs to the class-I aminoacyl-tRNA synthetase family. MetG type 1 subfamily. In terms of assembly, homodimer. The cofactor is Zn(2+).

Its subcellular location is the cytoplasm. It catalyses the reaction tRNA(Met) + L-methionine + ATP = L-methionyl-tRNA(Met) + AMP + diphosphate. Functionally, is required not only for elongation of protein synthesis but also for the initiation of all mRNA translation through initiator tRNA(fMet) aminoacylation. In Yersinia pestis bv. Antiqua (strain Angola), this protein is Methionine--tRNA ligase.